A 434-amino-acid polypeptide reads, in one-letter code: 3-phosphoshikimate 1-carboxyvinyltransferase (434 aa).

Positions 22, 23, and 27 each coordinate 3-phosphoshikimate. Lysine 22 provides a ligand contact to phosphoenolpyruvate. The phosphoenolpyruvate site is built by glycine 93 and arginine 121. 3-phosphoshikimate is bound by residues serine 168, serine 169, glutamine 170, serine 199, aspartate 320, and lysine 347. Position 170 (glutamine 170) interacts with phosphoenolpyruvate. Residue aspartate 320 is the Proton acceptor of the active site. Residues arginine 351, arginine 394, and lysine 419 each coordinate phosphoenolpyruvate.

Belongs to the EPSP synthase family. In terms of assembly, monomer.

The protein resides in the cytoplasm. The enzyme catalyses 3-phosphoshikimate + phosphoenolpyruvate = 5-O-(1-carboxyvinyl)-3-phosphoshikimate + phosphate. The protein operates within metabolic intermediate biosynthesis; chorismate biosynthesis; chorismate from D-erythrose 4-phosphate and phosphoenolpyruvate: step 6/7. In terms of biological role, catalyzes the transfer of the enolpyruvyl moiety of phosphoenolpyruvate (PEP) to the 5-hydroxyl of shikimate-3-phosphate (S3P) to produce enolpyruvyl shikimate-3-phosphate and inorganic phosphate. The protein is 3-phosphoshikimate 1-carboxyvinyltransferase of Burkholderia vietnamiensis (strain G4 / LMG 22486) (Burkholderia cepacia (strain R1808)).